The primary structure comprises 627 residues: Phosphomethylpyrimidine synthase (627 aa).

Residues 1 to 24 (MSATQKNNITRLEQLDRQSTQPFP) are compositionally biased toward polar residues. The segment at 1-29 (MSATQKNNITRLEQLDRQSTQPFPNSRKV) is disordered. Substrate is bound by residues Asn231, Met260, Tyr289, His325, 345 to 347 (SRG), 386 to 389 (DGLR), and Glu425. His429 contributes to the Zn(2+) binding site. Position 452 (Tyr452) interacts with substrate. His493 contacts Zn(2+). Cys573, Cys576, and Cys581 together coordinate [4Fe-4S] cluster.

It belongs to the ThiC family. As to quaternary structure, homodimer. [4Fe-4S] cluster serves as cofactor.

The catalysed reaction is 5-amino-1-(5-phospho-beta-D-ribosyl)imidazole + S-adenosyl-L-methionine = 4-amino-2-methyl-5-(phosphooxymethyl)pyrimidine + CO + 5'-deoxyadenosine + formate + L-methionine + 3 H(+). It functions in the pathway cofactor biosynthesis; thiamine diphosphate biosynthesis. In terms of biological role, catalyzes the synthesis of the hydroxymethylpyrimidine phosphate (HMP-P) moiety of thiamine from aminoimidazole ribotide (AIR) in a radical S-adenosyl-L-methionine (SAM)-dependent reaction. This Pseudomonas aeruginosa (strain UCBPP-PA14) protein is Phosphomethylpyrimidine synthase.